The primary structure comprises 1273 residues: DNA-directed RNA polymerase subunit beta (1273 aa).

The tract at residues 1252–1273 (ADDQDLVVSSNDEEVSENDERS) is disordered.

It belongs to the RNA polymerase beta chain family. In terms of assembly, the RNAP catalytic core consists of 2 alpha, 1 beta, 1 beta' and 1 omega subunit. When a sigma factor is associated with the core the holoenzyme is formed, which can initiate transcription.

It catalyses the reaction RNA(n) + a ribonucleoside 5'-triphosphate = RNA(n+1) + diphosphate. DNA-dependent RNA polymerase catalyzes the transcription of DNA into RNA using the four ribonucleoside triphosphates as substrates. The sequence is that of DNA-directed RNA polymerase subunit beta from Dehalococcoides mccartyi (strain CBDB1).